The sequence spans 398 residues: MIIHSLLDTDLYKFTMMQAVLHQHPAAQVDYRFKCRTPGVDLAQFIDEISREIDALCRLRLREDEVDYLRSLRFIKPDFADFLALFHLDRKYLALAASAAHPGEIELTIRGPWLHTILFEVPLLAIINEVWFRNTSEPDFEEGRSRLREKVRSLRSMPAGCKIADYGTRRRYSRQWHGELLPLLRDGLGEQFVGTSNVFFAKQYGLTPLGTMAHEYLQAFQALGPRLRDSQVAALDSWAREYRGDLGIALSDVVGLDAFLRDFDLYFCKLFDGMRHDSGDPFDWGERVIAHLEAHRVDPRTKVLVFSDGLNIDKVMRLYEHFSPRCRLAFGVGTSLTNDLGPTPLQIVIKMVRCNGQPVAKLSDSPGKSMCEDLGYLRYLRDVFGLPPMPEAGDPARQ.

Position 214 is a phosphohistidine; by autocatalysis (His-214).

The protein belongs to the NAPRTase family. Transiently phosphorylated on a His residue during the reaction cycle. Phosphorylation strongly increases the affinity for substrates and increases the rate of nicotinate D-ribonucleotide production. Dephosphorylation regenerates the low-affinity form of the enzyme, leading to product release.

The enzyme catalyses nicotinate + 5-phospho-alpha-D-ribose 1-diphosphate + ATP + H2O = nicotinate beta-D-ribonucleotide + ADP + phosphate + diphosphate. It functions in the pathway cofactor biosynthesis; NAD(+) biosynthesis; nicotinate D-ribonucleotide from nicotinate: step 1/1. Catalyzes the synthesis of beta-nicotinate D-ribonucleotide from nicotinate and 5-phospho-D-ribose 1-phosphate at the expense of ATP. The polypeptide is Nicotinate phosphoribosyltransferase (Xanthomonas campestris pv. campestris (strain 8004)).